We begin with the raw amino-acid sequence, 234 residues long: Uridylate kinase (234 aa).

Residue 9-12 (KLSG) participates in ATP binding. UMP is bound at residue G51. 2 residues coordinate ATP: G52 and R56. Residues D71 and 132 to 139 (CGNPFFTT) contribute to the UMP site. ATP-binding residues include T159, Y165, and D168.

This sequence belongs to the UMP kinase family. In terms of assembly, homohexamer.

Its subcellular location is the cytoplasm. It catalyses the reaction UMP + ATP = UDP + ADP. It functions in the pathway pyrimidine metabolism; CTP biosynthesis via de novo pathway; UDP from UMP (UMPK route): step 1/1. With respect to regulation, inhibited by UTP. Functionally, catalyzes the reversible phosphorylation of UMP to UDP. This is Uridylate kinase from Prochlorococcus marinus (strain AS9601).